Here is a 428-residue protein sequence, read N- to C-terminus: MTLDNNQELTYRNSQSLGQPGFSLAVNSSNPFNHSGLNFGQNNDSKKISVENNRIGEIVPGRVANIKVIGVGGGGGNAVNRMIESDVSGVEFWSINTDAQALTLAGAPSRLQIGQKLTRGLGAGGNPAIGQKAAEESRDEIATALEGADLVFITAGMGGGTGTGAAPIVAEVAKEMGALTVGVVTRPFVFEGRRRTSQAEQGIEGLKSRVDTLIIIPNNKLLEVIPEQTPVQEAFRYADDVLRQGVQGISDIITIPGLVNVDFADVRAVMADAGSALMGIGVSSGKSRAREAAIAAISSPLLECSIEGARGVVFNITGGSDLTLHEVNAAAETIYEVVDPNANIIFGAVIDDRLQGEVRITVIATGFTGEIQAAPQQNAANARVVSAPPKRTPTQTPLTNSPAPTPEPKEKSGLDIPDFLQRRRPPKN.

Residues 73–77 (GGGGN), 160–162 (GTG), Glu191, Arg195, and Asp239 each bind GTP. Residues 378–428 (NAANARVVSAPPKRTPTQTPLTNSPAPTPEPKEKSGLDIPDFLQRRRPPKN) are disordered. The segment covering 392-402 (TPTQTPLTNSP) has biased composition (polar residues).

Belongs to the FtsZ family. Homodimer. Polymerizes to form a dynamic ring structure in a strictly GTP-dependent manner. Interacts directly with several other division proteins.

The protein resides in the cytoplasm. Functionally, essential cell division protein that forms a contractile ring structure (Z ring) at the future cell division site. The regulation of the ring assembly controls the timing and the location of cell division. One of the functions of the FtsZ ring is to recruit other cell division proteins to the septum to produce a new cell wall between the dividing cells. Binds GTP and shows GTPase activity. The polypeptide is Cell division protein FtsZ (Nostoc sp. (strain PCC 7120 / SAG 25.82 / UTEX 2576)).